The primary structure comprises 539 residues: Phosphatidylinositol 4-phosphate 5-kinase type-1 beta (539 aa).

The tract at residues 1 to 21 (MSSTAENGDAVPGKQNEEKTY) is disordered. The PIPK domain occupies 25-395 (ASSAIKGAIQ…RFLKFMNSRV (371 aa)). Phosphoserine occurs at positions 445, 447, and 448.

Interacts with RAC1, AJUBA, PLD1, PLD2 and ARF1.

Its subcellular location is the cytoplasm. It localises to the cytosol. It is found in the cell membrane. The protein localises to the endomembrane system. It carries out the reaction a 1,2-diacyl-sn-glycero-3-phospho-(1D-myo-inositol 4-phosphate) + ATP = a 1,2-diacyl-sn-glycero-3-phospho-(1D-myo-inositol-4,5-bisphosphate) + ADP + H(+). The catalysed reaction is 1-octadecanoyl-2-(5Z,8Z,11Z,14Z)-eicosatetraenoyl-sn-glycero-3-phospho-1D-myo-inositol 4-phosphate + ATP = 1-octadecanoyl-2-(5Z,8Z,11Z,14Z)-eicosatetraenoyl-sn-glycero-3-phospho-1D-myo-inositol 4,5-bisphosphate + ADP + H(+). It catalyses the reaction 1-octadecanoyl-2-(9Z)-octadecenoyl-sn-glycero-3-phospho-1D-myo-inositol 4-phosphate + ATP = 1-octadecanoyl-2-(9Z)-octadecenoyl-sn-glycero-3-phospho-1D-myo-inositol 4,5-bisphosphate + ADP + H(+). The enzyme catalyses 1-octadecanoyl-2-(9Z)-octadecenoyl-sn-glycero-3-phospho-1D-myo-inositol + ATP = 1-octadecanoyl-2-(9Z)-octadecenoyl-sn-glycero-3-phospho-1D-myo-inositol 5-phosphate + ADP + H(+). It carries out the reaction 1-octadecanoyl-2-(9Z,12Z)-octadecadienoyl-sn-glycero-3-phospho-1D-myo-inositol + ATP = 1-octadecanoyl-2-(9Z,12Z)-octadecadienoyl-sn-glycero-3-phospho-1D-myo-inositol 5-phosphate + ADP + H(+). The catalysed reaction is 1-octadecanoyl-2-(5Z,8Z,11Z,14Z-eicosatetraenoyl)-sn-glycero-3-phospho-(1D-myo-inositol) + ATP = 1-octadecanoyl-2-(5Z,8Z,11Z,14Z)-eicosatetraenoyl-sn-glycero-3-phospho-1D-myo-inositol 5-phosphate + ADP + H(+). It catalyses the reaction 1,2-di-(9Z,12Z)-octadecadienoyl-sn-glycero-3-phospho-1D-myo-inositol + ATP = 1,2-di(9Z,12Z)-octadecadienoyl-sn-glycero-3-phospho-1D-myo-inositol 5-phosphate + ADP + H(+). In terms of biological role, catalyzes the phosphorylation of phosphatidylinositol 4-phosphate (PtdIns(4)P/PI4P) to form phosphatidylinositol 4,5-bisphosphate (PtdIns(4,5)P2/PIP2), a lipid second messenger that regulates several cellular processes such as signal transduction, vesicle trafficking, actin cytoskeleton dynamics, cell adhesion, and cell motility. PtdIns(4,5)P2 can directly act as a second messenger or can be utilized as a precursor to generate other second messengers: inositol 1,4,5-trisphosphate (IP3), diacylglycerol (DAG) or phosphatidylinositol-3,4,5-trisphosphate (PtdIns(3,4,5)P3/PIP3). Mediates RAC1-dependent reorganization of actin filaments. Contributes to the activation of phospholipase PLD2. Together with PIP5K1A, is required, after stimulation by G-protein coupled receptors, for the synthesis of IP3 that will induce stable platelet adhesion. The protein is Phosphatidylinositol 4-phosphate 5-kinase type-1 beta of Rattus norvegicus (Rat).